Consider the following 287-residue polypeptide: Phosphatidylserine decarboxylase proenzyme (287 aa).

Catalysis depends on charge relay system; for autoendoproteolytic cleavage activity residues D90, H147, and S252. Catalysis depends on S252, which acts as the Schiff-base intermediate with substrate; via pyruvic acid; for decarboxylase activity. S252 is modified (pyruvic acid (Ser); by autocatalysis).

It belongs to the phosphatidylserine decarboxylase family. PSD-B subfamily. Prokaryotic type I sub-subfamily. Heterodimer of a large membrane-associated beta subunit and a small pyruvoyl-containing alpha subunit. Pyruvate serves as cofactor. Is synthesized initially as an inactive proenzyme. Formation of the active enzyme involves a self-maturation process in which the active site pyruvoyl group is generated from an internal serine residue via an autocatalytic post-translational modification. Two non-identical subunits are generated from the proenzyme in this reaction, and the pyruvate is formed at the N-terminus of the alpha chain, which is derived from the carboxyl end of the proenzyme. The autoendoproteolytic cleavage occurs by a canonical serine protease mechanism, in which the side chain hydroxyl group of the serine supplies its oxygen atom to form the C-terminus of the beta chain, while the remainder of the serine residue undergoes an oxidative deamination to produce ammonia and the pyruvoyl prosthetic group on the alpha chain. During this reaction, the Ser that is part of the protease active site of the proenzyme becomes the pyruvoyl prosthetic group, which constitutes an essential element of the active site of the mature decarboxylase.

The protein localises to the cell membrane. It carries out the reaction a 1,2-diacyl-sn-glycero-3-phospho-L-serine + H(+) = a 1,2-diacyl-sn-glycero-3-phosphoethanolamine + CO2. The protein operates within phospholipid metabolism; phosphatidylethanolamine biosynthesis; phosphatidylethanolamine from CDP-diacylglycerol: step 2/2. Catalyzes the formation of phosphatidylethanolamine (PtdEtn) from phosphatidylserine (PtdSer). The sequence is that of Phosphatidylserine decarboxylase proenzyme from Pseudomonas putida (strain ATCC 47054 / DSM 6125 / CFBP 8728 / NCIMB 11950 / KT2440).